The primary structure comprises 496 residues: E3 ubiquitin-protein ligase XIAP (496 aa).

BIR repeat units follow at residues 26–93, 163–230, and 264–329; these read EFNR…CRFI, EEAR…CFFV, and YDAR…CKYL. Zn(2+) is bound by residues cysteine 299, cysteine 302, and histidine 319. Lysine 321 participates in a covalent cross-link: Glycyl lysine isopeptide (Lys-Gly) (interchain with G-Cter in ubiquitin). Cysteine 326 contributes to the Zn(2+) binding site. A Glycyl lysine isopeptide (Lys-Gly) (interchain with G-Cter in ubiquitin) cross-link involves residue lysine 327. The residue at position 449 (cysteine 449) is an S-nitrosocysteine. The RING-type zinc-finger motif lies at 449-484; the sequence is CKICMDRNIAIVFVPCGHLVTCKQCAEAVDKCPMCC.

Belongs to the IAP family. In terms of assembly, monomer, and homodimer. Interacts (via BIR3 domain) with DIABLO/SMAC; the interaction inhibits apoptotic suppressor activity. Interacts with HTRA2/PRSS25; the interaction inhibits apoptotic suppressor activity. Interacts with TAB1/MAP3K7IP1 and AIFM1. Interaction with DIABLO/SMAC hinders binding of TAB1/MAP3K7IP1 and AIFM1. Interacts with TCF25 and COMMD1. Interacts (via BIR3 domain) with SEPTIN4. Interacts with RIP1, RIP2, RIP3, RIP4, CCS and USP19. Interacts (via BIR 2 domain and BIR 3 domain) with HAX1 (via C-terminus) and this interaction blocks ubiquitination of XIAP/BIRC4. Interacts with the monomeric form of BIRC5/survivin. Interacts with TLE3 and TCF7L2/TCF4. Interacts (via BIR 3 and RING domains) with PDCL3. Post-translationally, S-Nitrosylation down-regulates its E3 ubiquitin-protein ligase activity. Autoubiquitinated. Ubiquitinated by TRIM32; leading to proteasomal degradation.

It localises to the cytoplasm. The protein resides in the nucleus. It carries out the reaction S-ubiquitinyl-[E2 ubiquitin-conjugating enzyme]-L-cysteine + [acceptor protein]-L-lysine = [E2 ubiquitin-conjugating enzyme]-L-cysteine + N(6)-ubiquitinyl-[acceptor protein]-L-lysine.. In terms of biological role, multi-functional protein which regulates not only caspases and apoptosis, but also modulates inflammatory signaling and immunity, copper homeostasis, mitogenic kinase signaling, cell proliferation, as well as cell invasion and metastasis. Acts as a direct caspase inhibitor. Directly bind to the active site pocket of CASP3 and CASP7 and obstructs substrate entry. Inactivates CASP9 by keeping it in a monomeric, inactive state. Acts as an E3 ubiquitin-protein ligase regulating NF-kappa-B signaling and the target proteins for its E3 ubiquitin-protein ligase activity include: RIPK1, RIPK2, MAP3K2/MEKK2, DIABLO/SMAC, AIFM1, CCS, PTEN and BIRC5/survivin. Acts as an important regulator of innate immunity by mediating 'Lys-63'-linked polyubiquitination of RIPK2 downstream of NOD1 and NOD2, thereby transforming RIPK2 into a scaffolding protein for downstream effectors, ultimately leading to activation of the NF-kappa-B and MAP kinases signaling. 'Lys-63'-linked polyubiquitination of RIPK2 also promotes recruitment of the LUBAC complex to RIPK2. Regulates the BMP signaling pathway and the SMAD and MAP3K7/TAK1 dependent pathways leading to NF-kappa-B and JNK activation. Ubiquitination of CCS leads to enhancement of its chaperone activity toward its physiologic target, SOD1, rather than proteasomal degradation. Ubiquitination of MAP3K2/MEKK2 and AIFM1 does not lead to proteasomal degradation. Plays a role in copper homeostasis by ubiquitinating COMMD1 and promoting its proteasomal degradation. Can also function as E3 ubiquitin-protein ligase of the NEDD8 conjugation pathway, targeting effector caspases for neddylation and inactivation. Ubiquitinates and therefore mediates the proteasomal degradation of BCL2 in response to apoptosis. Protects cells from spontaneous formation of the ripoptosome, a large multi-protein complex that has the capability to kill cancer cells in a caspase-dependent and caspase-independent manner. Suppresses ripoptosome formation by ubiquitinating RIPK1 and CASP8. Acts as a positive regulator of Wnt signaling and ubiquitinates TLE1, TLE2, TLE3, TLE4 and AES. Ubiquitination of TLE3 results in inhibition of its interaction with TCF7L2/TCF4 thereby allowing efficient recruitment and binding of the transcriptional coactivator beta-catenin to TCF7L2/TCF4 that is required to initiate a Wnt-specific transcriptional program. The sequence is that of E3 ubiquitin-protein ligase XIAP (Xiap) from Rattus norvegicus (Rat).